We begin with the raw amino-acid sequence, 405 residues long: Phosphopentomutase (405 aa).

Residues aspartate 10, aspartate 305, histidine 310, aspartate 346, histidine 347, and histidine 358 each coordinate Mn(2+).

Belongs to the phosphopentomutase family. Requires Mn(2+) as cofactor.

The protein resides in the cytoplasm. It carries out the reaction 2-deoxy-alpha-D-ribose 1-phosphate = 2-deoxy-D-ribose 5-phosphate. It catalyses the reaction alpha-D-ribose 1-phosphate = D-ribose 5-phosphate. It participates in carbohydrate degradation; 2-deoxy-D-ribose 1-phosphate degradation; D-glyceraldehyde 3-phosphate and acetaldehyde from 2-deoxy-alpha-D-ribose 1-phosphate: step 1/2. Functionally, isomerase that catalyzes the conversion of deoxy-ribose 1-phosphate (dRib-1-P) and ribose 1-phosphate (Rib-1-P) to deoxy-ribose 5-phosphate (dRib-5-P) and ribose 5-phosphate (Rib-5-P), respectively. The chain is Phosphopentomutase from Methylorubrum extorquens (strain CM4 / NCIMB 13688) (Methylobacterium extorquens).